We begin with the raw amino-acid sequence, 37 residues long: Cytochrome b6-f complex subunit 5 (37 aa).

The helical transmembrane segment at 5–25 threads the bilayer; the sequence is LLSGIILGLIPVTLSGLLVAA.

This sequence belongs to the PetG family. As to quaternary structure, the 4 large subunits of the cytochrome b6-f complex are cytochrome b6, subunit IV (17 kDa polypeptide, PetD), cytochrome f and the Rieske protein, while the 4 small subunits are PetG, PetL, PetM and PetN. The complex functions as a dimer.

The protein resides in the plastid. Its subcellular location is the chloroplast thylakoid membrane. Functionally, component of the cytochrome b6-f complex, which mediates electron transfer between photosystem II (PSII) and photosystem I (PSI), cyclic electron flow around PSI, and state transitions. PetG is required for either the stability or assembly of the cytochrome b6-f complex. The polypeptide is Cytochrome b6-f complex subunit 5 (Porphyra purpurea (Red seaweed)).